The primary structure comprises 102 residues: ATP-dependent Clp protease adapter protein ClpS (102 aa).

The protein belongs to the ClpS family. As to quaternary structure, binds to the N-terminal domain of the chaperone ClpA.

Functionally, involved in the modulation of the specificity of the ClpAP-mediated ATP-dependent protein degradation. This chain is ATP-dependent Clp protease adapter protein ClpS, found in Shewanella denitrificans (strain OS217 / ATCC BAA-1090 / DSM 15013).